Here is a 324-residue protein sequence, read N- to C-terminus: Lactonase drp35 (324 aa).

Residues Glu47, Ser109, Gly111, Asp129, Thr132, Tyr134, Asp137, Asn184, Asp235, and Ser236 each coordinate Ca(2+). Asp235 (proton donor) is an active-site residue.

It belongs to the SMP-30/CGR1 family. Ca(2+) is required as a cofactor.

It localises to the cytoplasm. Functionally, exhibits lactonase activity. Acts in cells with perturbed membrane integrity and is possibly related to the membrane homeostasis. The polypeptide is Lactonase drp35 (drp35) (Staphylococcus aureus (strain USA300)).